A 139-amino-acid polypeptide reads, in one-letter code: uncharacterized protein (139 aa).

Positions 1 to 62 constitute an HTH asnC-type domain; sequence MDDTDLQILS…NICYEKLNKH (62 aa). Positions 20–39 form a DNA-binding region, H-T-H motif; sequence MVELGKLVGLSSPSAAERVR.

This is an uncharacterized protein from Bacillus subtilis (strain 168).